The sequence spans 689 residues: Elongation factor G (689 aa).

Residues 8–283 (SKCRNIGIMA…AVVDFLPAPN (276 aa)) form the tr-type G domain. GTP contacts are provided by residues 17-24 (AHIDAGKT), 81-85 (DTPGH), and 135-138 (NKMD).

The protein belongs to the TRAFAC class translation factor GTPase superfamily. Classic translation factor GTPase family. EF-G/EF-2 subfamily.

It localises to the cytoplasm. Its function is as follows. Catalyzes the GTP-dependent ribosomal translocation step during translation elongation. During this step, the ribosome changes from the pre-translocational (PRE) to the post-translocational (POST) state as the newly formed A-site-bound peptidyl-tRNA and P-site-bound deacylated tRNA move to the P and E sites, respectively. Catalyzes the coordinated movement of the two tRNA molecules, the mRNA and conformational changes in the ribosome. The chain is Elongation factor G from Ehrlichia ruminantium (strain Welgevonden).